The following is a 254-amino-acid chain: D-aminoacyl-tRNA deacylase (254 aa).

A disordered region spans residues 61 to 82; that stretch reads KPTLTVHTPGNLTDDNSHGGNP. Over residues 65–74 the composition is skewed to polar residues; that stretch reads TVHTPGNLTD.

This sequence belongs to the DtdA deacylase family. In terms of assembly, monomer. The cofactor is Zn(2+).

The catalysed reaction is a D-aminoacyl-tRNA + H2O = a tRNA + a D-alpha-amino acid + H(+). It carries out the reaction glycyl-tRNA(Ala) + H2O = tRNA(Ala) + glycine + H(+). Its function is as follows. D-aminoacyl-tRNA deacylase with broad substrate specificity. By recycling D-aminoacyl-tRNA to D-amino acids and free tRNA molecules, this enzyme counteracts the toxicity associated with the formation of D-aminoacyl-tRNA entities in vivo. The polypeptide is D-aminoacyl-tRNA deacylase (Methanococcus maripaludis (strain DSM 14266 / JCM 13030 / NBRC 101832 / S2 / LL)).